The following is a 55-amino-acid chain: Cicadin (55 aa).

The segment covering 1–26 has biased composition (basic and acidic residues); the sequence is NEYHGFVDKANNENKRKKQQGRDDFV. The tract at residues 1-39 is disordered; sequence NEYHGFVDKANNENKRKKQQGRDDFVVKPNNFANRRRKD.

Possesses antifungal activity against B.cinerea, M.arachidicola, F.oxysporum, R.solani and C.comatus. In terms of biological role, suppresses the activity of HIV-1 reverse transcriptase and stimulates the proliferation of murine splenocytes. The polypeptide is Cicadin (Cicada flammata).